Reading from the N-terminus, the 322-residue chain is Sideroflexin-1 (322 aa).

Ser2 carries the N-acetylserine modification. The Mitochondrial matrix portion of the chain corresponds to 2–102 (SGEVPPNINI…MSAQVPMNMT (101 aa)). Residues 103-120 (ITGCMMTFYRTTPAVLFW) form a helical membrane-spanning segment. At 121-146 (QWINQSFNAVVNYTNRSGDAPLTVNE) the chain is on the mitochondrial intermembrane side. The helical transmembrane segment at 147 to 167 (LGTAYVSATTGAVATALGLNA) threads the bilayer. Over 168-174 (LTKHVSP) the chain is Mitochondrial matrix. Residues 175-195 (LIGRFVPFAAVAAANCINIPL) traverse the membrane as a helical segment. Topologically, residues 196–228 (MRQRELKVGIPVTDENGTRLGESTNAAKQAITQ) are mitochondrial intermembrane. A helical transmembrane segment spans residues 229-249 (VVISRILMAAPGMAIPPFIMN). Residues 250–266 (TLEKKAFLKRFPWMSAP) are Mitochondrial matrix-facing. Residues 267–287 (IQVTLVGFCLVFATPLCCALF) form a helical membrane-spanning segment. At 288-322 (PQKSSMSVTSLEDDLQASIQKSHPELRRVYFNKGL) the chain is on the mitochondrial intermembrane side.

Belongs to the sideroflexin family.

It localises to the mitochondrion inner membrane. It catalyses the reaction L-serine(in) = L-serine(out). The catalysed reaction is L-alanine(in) = L-alanine(out). It carries out the reaction L-cysteine(in) = L-cysteine(out). In terms of biological role, amino acid transporter importing serine, an essential substrate of the mitochondrial branch of the one-carbon pathway, into mitochondria. Mitochondrial serine is then converted to glycine and formate, which exits to the cytosol where it is used to generate the charged folates that serve as one-carbon donors. May also transport other amino acids including alanine and cysteine. The protein is Sideroflexin-1 (Sfxn1) of Rattus norvegicus (Rat).